Here is a 269-residue protein sequence, read N- to C-terminus: Formamidopyrimidine-DNA glycosylase (269 aa).

The active-site Schiff-base intermediate with DNA is the P2. Residue E3 is the Proton donor of the active site. K57 functions as the Proton donor; for beta-elimination activity in the catalytic mechanism. DNA contacts are provided by H90, R109, and K150. An FPG-type zinc finger spans residues 235–269 (QVYGRKGEPCRVCGTPIVATKHAQRATFYCRQCQK). The active-site Proton donor; for delta-elimination activity is the R259.

It belongs to the FPG family. Monomer. The cofactor is Zn(2+).

The catalysed reaction is Hydrolysis of DNA containing ring-opened 7-methylguanine residues, releasing 2,6-diamino-4-hydroxy-5-(N-methyl)formamidopyrimidine.. It carries out the reaction 2'-deoxyribonucleotide-(2'-deoxyribose 5'-phosphate)-2'-deoxyribonucleotide-DNA = a 3'-end 2'-deoxyribonucleotide-(2,3-dehydro-2,3-deoxyribose 5'-phosphate)-DNA + a 5'-end 5'-phospho-2'-deoxyribonucleoside-DNA + H(+). In terms of biological role, involved in base excision repair of DNA damaged by oxidation or by mutagenic agents. Acts as a DNA glycosylase that recognizes and removes damaged bases. Has a preference for oxidized purines, such as 7,8-dihydro-8-oxoguanine (8-oxoG). Has AP (apurinic/apyrimidinic) lyase activity and introduces nicks in the DNA strand. Cleaves the DNA backbone by beta-delta elimination to generate a single-strand break at the site of the removed base with both 3'- and 5'-phosphates. The polypeptide is Formamidopyrimidine-DNA glycosylase (Escherichia coli O7:K1 (strain IAI39 / ExPEC)).